Here is a 258-residue protein sequence, read N- to C-terminus: Glutamate racemase (258 aa).

Residues 11–12 (DS) and 43–44 (YG) contribute to the substrate site. Cysteine 74 serves as the catalytic Proton donor/acceptor. 75–76 (NT) lines the substrate pocket. Cysteine 187 acts as the Proton donor/acceptor in catalysis. Residue 188–189 (TH) coordinates substrate.

The protein belongs to the aspartate/glutamate racemases family.

The enzyme catalyses L-glutamate = D-glutamate. It participates in cell wall biogenesis; peptidoglycan biosynthesis. In terms of biological role, provides the (R)-glutamate required for cell wall biosynthesis. The chain is Glutamate racemase from Bifidobacterium animalis subsp. lactis (strain AD011).